Consider the following 92-residue polypeptide: MTRSLKKNPFVANHLLRKLDKLNTKEEKEIIVTWSRASTIIPTMIGHTIAIHNGREHLPVYITDRMIGHKLGEFSPTLNFRGHAKNDNRSRR.

Belongs to the universal ribosomal protein uS19 family.

It localises to the plastid. The protein localises to the chloroplast. In terms of biological role, protein S19 forms a complex with S13 that binds strongly to the 16S ribosomal RNA. In Fagopyrum esculentum subsp. ancestrale (Wild buckwheat), this protein is Small ribosomal subunit protein uS19c.